Consider the following 829-residue polypeptide: Telomere length regulation protein TEL2 homolog (829 aa).

Disordered stretches follow at residues serine 446–valine 493 and serine 620–isoleucine 641. A compositionally biased stretch (low complexity) spans serine 456 to proline 466. The span at glutamate 467–glutamine 480 shows a compositional bias: basic and acidic residues. Positions serine 482–valine 493 are enriched in acidic residues. Positions alanine 629–isoleucine 641 are enriched in polar residues.

The protein belongs to the TEL2 family.

Its subcellular location is the cytoplasm. The protein resides in the membrane. It localises to the nucleus. It is found in the chromosome. The protein localises to the telomere. In terms of biological role, regulator of the DNA damage response (DDR). Part of the TTT complex that is required to stabilize protein levels of the phosphatidylinositol 3-kinase-related protein kinase (PIKK) family proteins. Promotes assembly, stabilizes and maintains the activity of TORC complexes, which regulate cell growth and survival in response to nutrient and hormonal signals. May be involved in telomere length regulation. The sequence is that of Telomere length regulation protein TEL2 homolog (telo2) from Xenopus tropicalis (Western clawed frog).